An 806-amino-acid polypeptide reads, in one-letter code: Ankyrin repeat, bromo and BTB domain-containing protein DDB_G0293800 (806 aa).

5 ANK repeats span residues 1 to 30, 34 to 63, 67 to 96, 100 to 130, and 134 to 163; these read MSNKTLPYCCEHGLKDEVIALLAKGEDVNQ, SNRYPLHYAAIGGYIEIVAMLLERGALVNC, RGATPLHYASRGGRIECIQLLIDNKADVNC, AGSTPLHTALQCNETKCAIALIETFGADVNL, and EGSTALHLASARGLVPVIVALLENGARADV. Over residues 210–228 the composition is skewed to basic and acidic residues; sequence GVGKKEDDDNNMKIDKQES. The interval 210-231 is disordered; it reads GVGKKEDDDNNMKIDKQESEQQ. Residues 239 to 307 enclose the BTB domain; the sequence is SDITFLIENQ…IYTGSIEKFE (69 aa). Disordered stretches follow at residues 423-517 and 621-743; these read TRTA…SDSM and QNFP…EERR. 2 stretches are compositionally biased toward low complexity: residues 426 to 436 and 443 to 511; these read ANANASNSNQS and TSTT…SSSS. In terms of domain architecture, Bromo spans 516-622; sequence SMNEKNLTFC…NAFDQKFLQN (107 aa). A compositionally biased stretch (pro residues) spans 626-641; that stretch reads EKPPTYKPPPPTPTPI. Low complexity predominate over residues 642–658; that stretch reads PTQQQQQQSTSSTSTPT. The span at 666 to 675 shows a compositional bias: basic and acidic residues; sequence DEHVKVKEDT. Residues 676–693 show a composition bias toward polar residues; it reads NSAQPTSSSSNHTNGENA. Positions 694–733 are enriched in low complexity; that stretch reads SSSSSSSSSKQSNNNNNNNNNNNSNSTTNSSSSSSSTTTT. The NET domain maps to 727 to 806; sequence SSSTTTTQKK…ECFKKQKQDE (80 aa).

This Dictyostelium discoideum (Social amoeba) protein is Ankyrin repeat, bromo and BTB domain-containing protein DDB_G0293800.